The primary structure comprises 310 residues: p-hydroxybenzoic acid efflux pump subunit AaeA (310 aa).

Residues 12-32 traverse the membrane as a helical segment; sequence AITLVLVILAFIAIFRAWVYY.

Belongs to the membrane fusion protein (MFP) (TC 8.A.1) family.

It localises to the cell inner membrane. In terms of biological role, forms an efflux pump with AaeB. This is p-hydroxybenzoic acid efflux pump subunit AaeA from Salmonella heidelberg (strain SL476).